The sequence spans 89 residues: Small ribosomal subunit protein uS15 (89 aa).

This sequence belongs to the universal ribosomal protein uS15 family. In terms of assembly, part of the 30S ribosomal subunit. Forms a bridge to the 50S subunit in the 70S ribosome, contacting the 23S rRNA.

One of the primary rRNA binding proteins, it binds directly to 16S rRNA where it helps nucleate assembly of the platform of the 30S subunit by binding and bridging several RNA helices of the 16S rRNA. Its function is as follows. Forms an intersubunit bridge (bridge B4) with the 23S rRNA of the 50S subunit in the ribosome. The polypeptide is Small ribosomal subunit protein uS15 (Burkholderia ambifaria (strain MC40-6)).